We begin with the raw amino-acid sequence, 187 residues long: Guanylate kinase (187 aa).

The Guanylate kinase-like domain occupies 5-183; that stretch reads GRLTVLTGPS…ALKQLETHMQ (179 aa). 12–19 serves as a coordination point for ATP; that stretch reads GPSGVGKG.

Belongs to the guanylate kinase family.

It is found in the cytoplasm. It catalyses the reaction GMP + ATP = GDP + ADP. The enzyme catalyses dZMP + ATP = dZDP + ADP. It participates in purine metabolism. In terms of biological role, essential for recycling GMP and indirectly, cGMP. Its function is as follows. (Microbial infection) Catalyzes the phosphorylation of dZMP to dZDP, when the bacterium is infected by a phage that produces the substrate for the synthesis of dZTP (2- amino-2'-deoxyadenosine 5'-triphosphate), which is then used by the phage as a DNA polymerase substrate. This Synechococcus sp. (strain CC9902) protein is Guanylate kinase.